The sequence spans 92 residues: MPRSLKKGPFIDLHLLKKVEKAMESGEKKPIKTWSRRSMIIPDMIGLTIAVHNGRQHVPVFVTDEMVGQKLGEFAPTRTYRGHTSDKKTKKK.

It belongs to the universal ribosomal protein uS19 family.

Its function is as follows. Protein S19 forms a complex with S13 that binds strongly to the 16S ribosomal RNA. This is Small ribosomal subunit protein uS19 from Psychromonas ingrahamii (strain DSM 17664 / CCUG 51855 / 37).